The following is a 262-amino-acid chain: Ribosomal RNA small subunit methyltransferase A (262 aa).

His-16, Leu-18, Gly-43, Glu-64, Asp-89, and Asn-109 together coordinate S-adenosyl-L-methionine.

Belongs to the class I-like SAM-binding methyltransferase superfamily. rRNA adenine N(6)-methyltransferase family. RsmA subfamily.

It localises to the cytoplasm. It carries out the reaction adenosine(1518)/adenosine(1519) in 16S rRNA + 4 S-adenosyl-L-methionine = N(6)-dimethyladenosine(1518)/N(6)-dimethyladenosine(1519) in 16S rRNA + 4 S-adenosyl-L-homocysteine + 4 H(+). In terms of biological role, specifically dimethylates two adjacent adenosines (A1518 and A1519) in the loop of a conserved hairpin near the 3'-end of 16S rRNA in the 30S particle. May play a critical role in biogenesis of 30S subunits. In Xanthomonas oryzae pv. oryzae (strain MAFF 311018), this protein is Ribosomal RNA small subunit methyltransferase A.